Consider the following 284-residue polypeptide: Acetylglutamate kinase (284 aa).

Residues 66–67, Arg-88, and Asn-179 each bind substrate; that span reads GG.

The protein belongs to the acetylglutamate kinase family. ArgB subfamily.

It localises to the cytoplasm. It carries out the reaction N-acetyl-L-glutamate + ATP = N-acetyl-L-glutamyl 5-phosphate + ADP. The protein operates within amino-acid biosynthesis; L-arginine biosynthesis; N(2)-acetyl-L-ornithine from L-glutamate: step 2/4. Catalyzes the ATP-dependent phosphorylation of N-acetyl-L-glutamate. In Actinobacillus pleuropneumoniae serotype 7 (strain AP76), this protein is Acetylglutamate kinase.